A 121-amino-acid polypeptide reads, in one-letter code: Neuromedin-B (121 aa).

Residues M1–A24 form the signal peptide. M56 carries the methionine amide modification. Positions S60–K121 are excised as a propeptide.

This sequence belongs to the bombesin/neuromedin-B/ranatensin family. In terms of tissue distribution, higher expression in the central nervous system (CNS) than in peripheral tissues. Highest levels are found in the olfactory bulb. Relatively high levels in the CNS (including the cerebral cortex, cerebellum, spinal cord, medulla oblongata, midbrain, hypothalamus, hippocampus, and hypophysis) and in peripheral tissues such as the pancreas, adrenal gland, testis, ovary and cecum. Moderate levels are found in the rectum, heart and pons with low expression levels detected in the bone marrow and duodenum. Other tissues show no or low levels of expression.

Its subcellular location is the secreted. It localises to the cell projection. The protein resides in the neuron projection. Its function is as follows. Stimulates smooth muscle contraction. Induces sighing by acting directly on the pre-Botzinger complex, a cluster of several thousand neurons in the ventrolateral medulla responsible for inspiration during respiratory activity. Contributes to the induction of sneezing following exposure to chemical irritants or allergens which causes release of NMB by nasal sensory neurons and activation of NMBR-expressing neurons in the sneeze-evoking region of the brainstem. These in turn activate neurons of the caudal ventral respiratory group, giving rise to the sneezing response. Contributes to induction of acute itch, possibly through activation of the NMBR receptor on dorsal root ganglion neurons. Increases expression of NMBR and steroidogenic mediators STAR, CYP11A1 and HSD3B1 in Leydig cells, induces secretion of testosterone by Leydig cells and also promotes Leydig cell proliferation. Plays a role in the innate immune response to influenza A virus infection by enhancing interferon alpha expression and reducing expression of IL6. Plays a role in CSF1-induced proliferation of osteoclast precursors by contributing to positive regulation of the expression of the CSF1 receptor CSF1R. This is Neuromedin-B (NMB) from Sus scrofa (Pig).